A 502-amino-acid chain; its full sequence is MEFSVKSGSPEKQRSACIVVGVYEPRRLSGIAEQLDKISEGYISNLLRRGDLEGKPGQMLLLHHVPNVLSERVLLVGCGKERELDERQYKQIITKTINTLNETGSMEAVCFLTELHVKGRDTYWKVREAVESTQNSLYSFDALKTRKGETRRPLRKLVFNVPTRRELTVGERAIEHGMAVSAGMHLCRDVANMPPNICNPAYLASQARQIAENTENLTVTTVGEEQMEKLGMNSYLAVGRGSDNESVMTIMEYKGAVDNTQKPIVLIGKGLTFDSGGISLKPGEGMDEMKYDMGGAAGVIGAMKALCDMQLPINVIGVLAGCENMPSSNAYRPGDILTTMSGQTVEVLNTDAEGRLVLCDVLTYVERFDPELVVDTATLTGACVIALGKHASGLFSGHNPLAHELLNAGEQSGDRAWRMPLWDEYQEHLESPFADMTNLGGRPAGSITAACFLSRFAKKYNWAHLDVAGTAWNSGANKGSTGRPVPLLTQFLINRAGVDQGE.

Mn(2+)-binding residues include Lys-269 and Asp-274. Residue Lys-281 is part of the active site. Asp-292, Asp-351, and Glu-353 together coordinate Mn(2+). Residue Arg-355 is part of the active site.

It belongs to the peptidase M17 family. Mn(2+) is required as a cofactor.

The protein resides in the cytoplasm. The catalysed reaction is Release of an N-terminal amino acid, Xaa-|-Yaa-, in which Xaa is preferably Leu, but may be other amino acids including Pro although not Arg or Lys, and Yaa may be Pro. Amino acid amides and methyl esters are also readily hydrolyzed, but rates on arylamides are exceedingly low.. The enzyme catalyses Release of an N-terminal amino acid, preferentially leucine, but not glutamic or aspartic acids.. Its function is as follows. Presumably involved in the processing and regular turnover of intracellular proteins. Catalyzes the removal of unsubstituted N-terminal amino acids from various peptides. The sequence is that of Probable cytosol aminopeptidase from Shewanella piezotolerans (strain WP3 / JCM 13877).